An 897-amino-acid chain; its full sequence is Translation initiation factor IF-2 (897 aa).

The tract at residues 52-310 is disordered; it reads EHGSAPDKLT…LLQQGFQKPA (259 aa). The span at 68-82 shows a compositional bias: polar residues; that stretch reads STLNVPGTGGKSKSV. Composition is skewed to basic and acidic residues over residues 85–159 and 166–217; these read EVRK…KDKV and EMTK…ENEK. Positions 256 to 272 are enriched in basic residues; the sequence is GRTRTASKTARPQKKGN. Basic and acidic residues predominate over residues 273–286; that stretch reads KHAESKADREEARA. Residues 396–565 enclose the tr-type G domain; sequence PRAPVVTIMG…LLQAEVLELK (170 aa). The interval 405–412 is G1; it reads GHVDHGKT. 405–412 provides a ligand contact to GTP; the sequence is GHVDHGKT. The interval 430 to 434 is G2; it reads GITQH. The segment at 451 to 454 is G3; that stretch reads DTPG. Residues 451–455 and 505–508 contribute to the GTP site; these read DTPGH and NKID. A G4 region spans residues 505-508; the sequence is NKID. The G5 stretch occupies residues 541–543; sequence SAK.

Belongs to the TRAFAC class translation factor GTPase superfamily. Classic translation factor GTPase family. IF-2 subfamily.

Its subcellular location is the cytoplasm. Functionally, one of the essential components for the initiation of protein synthesis. Protects formylmethionyl-tRNA from spontaneous hydrolysis and promotes its binding to the 30S ribosomal subunits. Also involved in the hydrolysis of GTP during the formation of the 70S ribosomal complex. This chain is Translation initiation factor IF-2 (infB), found in Enterobacter cloacae.